The following is a 320-amino-acid chain: ATP-dependent 6-phosphofructokinase (320 aa).

Gly-12 contributes to the ATP binding site. An ADP-binding site is contributed by 22-26; the sequence is RAVVR. ATP is bound by residues 73 to 74 and 103 to 106; these read RF and GDGS. Asp-104 serves as a coordination point for Mg(2+). Position 126-128 (126-128) interacts with substrate; sequence TID. Residue Asp-128 is the Proton acceptor of the active site. ADP is bound at residue Arg-155. Substrate contacts are provided by residues Arg-163 and 170-172; that span reads MGR. Residues 186-188 and 214-216 contribute to the ADP site; these read GAE and KNH. Substrate-binding positions include Glu-223, Arg-244, and 250 to 253; that span reads HIQR.

This sequence belongs to the phosphofructokinase type A (PFKA) family. ATP-dependent PFK group I subfamily. Prokaryotic clade 'B1' sub-subfamily. Homotetramer. Mg(2+) is required as a cofactor.

It localises to the cytoplasm. It carries out the reaction beta-D-fructose 6-phosphate + ATP = beta-D-fructose 1,6-bisphosphate + ADP + H(+). The protein operates within carbohydrate degradation; glycolysis; D-glyceraldehyde 3-phosphate and glycerone phosphate from D-glucose: step 3/4. Allosterically activated by ADP and other diphosphonucleosides, and allosterically inhibited by phosphoenolpyruvate. Its function is as follows. Catalyzes the phosphorylation of D-fructose 6-phosphate to fructose 1,6-bisphosphate by ATP, the first committing step of glycolysis. The sequence is that of ATP-dependent 6-phosphofructokinase from Teredinibacter turnerae (strain ATCC 39867 / T7901).